We begin with the raw amino-acid sequence, 893 residues long: Major vault protein (893 aa).

Residue Ala2 is modified to N-acetylalanine. 9 MVP repeats span residues 2 to 56, 57 to 111, 112 to 164, 165 to 217, 218 to 272, 273 to 323, 324 to 379, 380 to 457, and 458 to 520; these read ATEE…VPPR, HYCT…DITP, LQVV…EIIQ, ATII…DLVD, AVIL…GVVP, ITTL…IQDV, YVLS…ERQA, IPLD…KTRV, and VSYR…LLGP. Lys444 is covalently cross-linked (Glycyl lysine isopeptide (Lys-Gly) (interchain with G-Cter in SUMO2)). Ser445 is subject to Phosphoserine. Lys704 is covalently cross-linked (Glycyl lysine isopeptide (Lys-Gly) (interchain with G-Cter in SUMO2)). The segment at 856 to 893 is disordered; that stretch reads QPLGRRVASGPSPGEGISPQSAQAPQAPGDNHVVPVLR.

In terms of assembly, the vault ribonucleoprotein particle is a huge (400 A x 670 A) cage structure of 12.9 MDa. It consists of a dimer of half-vaults, with each half-vault comprising 39 identical major vault protein (MVP) chains, PARP4 and one or more vault RNAs (vRNAs). Interacts with TEP1. Interacts with PTEN and activated MAPK1. The phosphorylated protein interacts with the SH2 domains of PTPN11 and SRC. Interacts with APEX1. May interact with ZNF540. In terms of processing, phosphorylated on Tyr residues after EGF stimulation. Post-translationally, dephosphorylated by PTPN11.

It is found in the cytoplasm. The protein localises to the nucleus. Functionally, required for normal vault structure. Vaults are multi-subunit structures that may act as scaffolds for proteins involved in signal transduction. Vaults may also play a role in nucleo-cytoplasmic transport. Down-regulates IFNG-mediated STAT1 signaling and subsequent activation of JAK. Down-regulates SRC activity and signaling through MAP kinases. This Pongo abelii (Sumatran orangutan) protein is Major vault protein (MVP).